The sequence spans 588 residues: WD repeat-containing protein DDB_G0349043 (588 aa).

The interval 1-32 (MPLDNKVQLNENGKEVNNNNNNDEDLKIQDNH) is disordered. The LisH domain occupies 40–72 (NRSELVRLLIQSLNSLGYDKSAEFLEKDSGISL). One can recognise a CTLH domain in the interval 73–129 (QSKEINQFSECVVSGDWNKVEELLPFLKLNEFDTNNVKFLVYSQKFLEYLENHKIKE). WD repeat units lie at residues 244–283 (KHRD…LDQP), 294–333 (GHTK…LLKT), and 336–375 (KHSD…LTNS). A disordered region spans residues 376-403 (NNNNNNHNNNNSNINGNSINGSNNNGNN). WD repeat units lie at residues 413 to 452 (WACA…TPEV), 455 to 494 (METD…IVQK), 499 to 539 (KQGR…LLET), and 542 to 582 (RHSG…NSFI).

The polypeptide is WD repeat-containing protein DDB_G0349043 (Dictyostelium discoideum (Social amoeba)).